The chain runs to 160 residues: Photosystem II extrinsic protein V (160 aa).

A signal peptide spans methionine 1 to alanine 25. 4 residues coordinate heme c: cysteine 62, cysteine 65, histidine 66, and histidine 117.

Belongs to the cytochrome c family. PsbV subfamily. As to quaternary structure, PSII is composed of 1 copy each of membrane proteins PsbA, PsbB, PsbC, PsbD, PsbE, PsbF, PsbH, PsbI, PsbJ, PsbK, PsbL, PsbM, PsbT, PsbX, PsbY, PsbZ, Psb30/Ycf12, peripheral proteins PsbO, CyanoQ (PsbQ), PsbU, PsbV and a large number of cofactors. It forms dimeric complexes. Heme c serves as cofactor.

The protein resides in the cellular thylakoid membrane. One of the extrinsic, lumenal subunits of photosystem II (PSII). PSII is a light-driven water plastoquinone oxidoreductase, using light energy to abstract electrons from H(2)O, generating a proton gradient subsequently used for ATP formation. The extrinsic proteins stabilize the structure of photosystem II oxygen-evolving complex (OEC), the ion environment of oxygen evolution and protect the OEC against heat-induced inactivation. Low-potential cytochrome c that plays a role in the OEC of PSII. The chain is Photosystem II extrinsic protein V from Rippkaea orientalis (strain PCC 8801 / RF-1) (Cyanothece sp. (strain PCC 8801)).